The chain runs to 147 residues: Protein archease (147 aa).

Ca(2+)-binding residues include aspartate 17, aspartate 146, and isoleucine 147.

This sequence belongs to the archease family.

Activates the tRNA-splicing ligase complex by facilitating the enzymatic turnover of catalytic subunit RtcB. Acts by promoting the guanylylation of RtcB, a key intermediate step in tRNA ligation. Can also alter the NTP specificity of RtcB such that ATP, dGTP or ITP is used efficiently. This chain is Protein archease, found in Pyrobaculum neutrophilum (strain DSM 2338 / JCM 9278 / NBRC 100436 / V24Sta) (Thermoproteus neutrophilus).